We begin with the raw amino-acid sequence, 151 residues long: D-aminoacyl-tRNA deacylase (151 aa).

Residues 138-139 (GP) carry the Gly-cisPro motif, important for rejection of L-amino acids motif.

The protein belongs to the DTD family. Homodimer.

The protein resides in the cytoplasm. The catalysed reaction is glycyl-tRNA(Ala) + H2O = tRNA(Ala) + glycine + H(+). It catalyses the reaction a D-aminoacyl-tRNA + H2O = a tRNA + a D-alpha-amino acid + H(+). Functionally, an aminoacyl-tRNA editing enzyme that deacylates mischarged D-aminoacyl-tRNAs. Also deacylates mischarged glycyl-tRNA(Ala), protecting cells against glycine mischarging by AlaRS. Acts via tRNA-based rather than protein-based catalysis; rejects L-amino acids rather than detecting D-amino acids in the active site. By recycling D-aminoacyl-tRNA to D-amino acids and free tRNA molecules, this enzyme counteracts the toxicity associated with the formation of D-aminoacyl-tRNA entities in vivo and helps enforce protein L-homochirality. In Picosynechococcus sp. (strain ATCC 27264 / PCC 7002 / PR-6) (Agmenellum quadruplicatum), this protein is D-aminoacyl-tRNA deacylase.